The primary structure comprises 251 residues: Ubiquinone/menaquinone biosynthesis C-methyltransferase UbiE (251 aa).

Residues threonine 74, aspartate 95, and 123–124 (NA) contribute to the S-adenosyl-L-methionine site.

This sequence belongs to the class I-like SAM-binding methyltransferase superfamily. MenG/UbiE family.

The catalysed reaction is a 2-demethylmenaquinol + S-adenosyl-L-methionine = a menaquinol + S-adenosyl-L-homocysteine + H(+). It carries out the reaction a 2-methoxy-6-(all-trans-polyprenyl)benzene-1,4-diol + S-adenosyl-L-methionine = a 5-methoxy-2-methyl-3-(all-trans-polyprenyl)benzene-1,4-diol + S-adenosyl-L-homocysteine + H(+). The protein operates within quinol/quinone metabolism; menaquinone biosynthesis; menaquinol from 1,4-dihydroxy-2-naphthoate: step 2/2. It functions in the pathway cofactor biosynthesis; ubiquinone biosynthesis. Its function is as follows. Methyltransferase required for the conversion of demethylmenaquinol (DMKH2) to menaquinol (MKH2) and the conversion of 2-polyprenyl-6-methoxy-1,4-benzoquinol (DDMQH2) to 2-polyprenyl-3-methyl-6-methoxy-1,4-benzoquinol (DMQH2). The protein is Ubiquinone/menaquinone biosynthesis C-methyltransferase UbiE of Shewanella putrefaciens (strain CN-32 / ATCC BAA-453).